The following is a 217-amino-acid chain: Ribosomal RNA small subunit methyltransferase G (217 aa).

S-adenosyl-L-methionine is bound by residues Gly-79, Phe-84, 130–131 (AE), and Arg-148.

This sequence belongs to the methyltransferase superfamily. RNA methyltransferase RsmG family.

The protein resides in the cytoplasm. The enzyme catalyses guanosine(527) in 16S rRNA + S-adenosyl-L-methionine = N(7)-methylguanosine(527) in 16S rRNA + S-adenosyl-L-homocysteine. Specifically methylates the N7 position of guanine in position 527 of 16S rRNA. The protein is Ribosomal RNA small subunit methyltransferase G of Myxococcus xanthus (strain DK1622).